A 506-amino-acid chain; its full sequence is UBX domain-containing protein 4 (506 aa).

The segment at 1–199 (MLWFQGAIPA…PAEDLTVRVE (199 aa)) is interaction with UBQLN1. At 1 to 411 (MLWFQGAIPA…VHSSSGDIWT (411 aa)) the chain is on the cytoplasmic side. The disordered stretch occupies residues 110–194 (QQMHSSKGEA…CSNQRPAEDL (85 aa)). 2 stretches are compositionally biased toward polar residues: residues 120–136 (SVTN…TPSA) and 153–167 (LCET…SDTA). One can recognise a UBX domain in the interval 313–391 (DRSTIARIQF…ELAPSASVVL (79 aa)). Residues 412-432 (LLGTVLYPFLAIWRLISNFLF) lie within the membrane without spanning it. The Cytoplasmic portion of the chain corresponds to 433-506 (SNPPPAQTSA…TWNGNSTQQM (74 aa)). The interval 437 to 506 (PAQTSARATS…TWNGNSTQQM (70 aa)) is disordered. Low complexity predominate over residues 444–456 (ATSTEPSNSASSS). The segment covering 457-489 (KSEKREPVRKRMLEKRGEDFKKEGKIYRLRTQD) has biased composition (basic and acidic residues). Phosphothreonine is present on Thr487. Positions 496–506 (NTWNGNSTQQM) are enriched in polar residues.

Directly interacts with VCP. Interacts with UBQLN1. Forms a complex with VCP and UBQLN1. In terms of tissue distribution, expressed in many tissues, including brain, heart, kidney, liver, muscle and spleen (at protein level).

It localises to the endoplasmic reticulum membrane. The protein resides in the nucleus envelope. In terms of biological role, involved in endoplasmic reticulum-associated protein degradation (ERAD). Acts as a platform to recruit both UBQLN1 and VCP to the ER during ERAD. This is UBX domain-containing protein 4 (Ubxn4) from Mus musculus (Mouse).